Reading from the N-terminus, the 589-residue chain is ATP-dependent lipid A-core flippase (589 aa).

Helical transmembrane passes span 29–49 (LLLV…TGFL), 70–90 (WLPV…YITD), 157–177 (VIGA…TILV), 261–281 (MIGA…ALAG), and 283–303 (LTAG…PGLK). The region spanning 32–314 (VAALIAALIE…LTNVQNMVQR (283 aa)) is the ABC transmembrane type-1 domain. The 237-residue stretch at 346–582 (IEFRDVTARY…GGLYSHLHGM (237 aa)) folds into the ABC transporter domain. Residue 380–387 (GRSGSGKS) coordinates ATP.

The protein belongs to the ABC transporter superfamily. Lipid exporter (TC 3.A.1.106) family. In terms of assembly, homodimer.

It localises to the cell inner membrane. It catalyses the reaction ATP + H2O + lipid A-core oligosaccharideSide 1 = ADP + phosphate + lipid A-core oligosaccharideSide 2.. Functionally, involved in lipopolysaccharide (LPS) biosynthesis. Translocates lipid A-core from the inner to the outer leaflet of the inner membrane. Transmembrane domains (TMD) form a pore in the inner membrane and the ATP-binding domain (NBD) is responsible for energy generation. This chain is ATP-dependent lipid A-core flippase, found in Xanthomonas campestris pv. campestris (strain 8004).